The sequence spans 385 residues: Queuine tRNA-ribosyltransferase (385 aa).

Catalysis depends on D92, which acts as the Proton acceptor. Residues 92 to 96 (DSGGF), D146, Q188, and G215 contribute to the substrate site. An RNA binding region spans residues 246-252 (GVGHPED). D265 functions as the Nucleophile in the catalytic mechanism. Residues 270-274 (TRTGR) form an RNA binding; important for wobble base 34 recognition region. Zn(2+) is bound by residues C303, C305, C308, and H334.

It belongs to the queuine tRNA-ribosyltransferase family. As to quaternary structure, homodimer. Within each dimer, one monomer is responsible for RNA recognition and catalysis, while the other monomer binds to the replacement base PreQ1. Zn(2+) is required as a cofactor.

It catalyses the reaction 7-aminomethyl-7-carbaguanine + guanosine(34) in tRNA = 7-aminomethyl-7-carbaguanosine(34) in tRNA + guanine. Its pathway is tRNA modification; tRNA-queuosine biosynthesis. In terms of biological role, catalyzes the base-exchange of a guanine (G) residue with the queuine precursor 7-aminomethyl-7-deazaguanine (PreQ1) at position 34 (anticodon wobble position) in tRNAs with GU(N) anticodons (tRNA-Asp, -Asn, -His and -Tyr). Catalysis occurs through a double-displacement mechanism. The nucleophile active site attacks the C1' of nucleotide 34 to detach the guanine base from the RNA, forming a covalent enzyme-RNA intermediate. The proton acceptor active site deprotonates the incoming PreQ1, allowing a nucleophilic attack on the C1' of the ribose to form the product. After dissociation, two additional enzymatic reactions on the tRNA convert PreQ1 to queuine (Q), resulting in the hypermodified nucleoside queuosine (7-(((4,5-cis-dihydroxy-2-cyclopenten-1-yl)amino)methyl)-7-deazaguanosine). The protein is Queuine tRNA-ribosyltransferase of Thermus thermophilus (strain ATCC BAA-163 / DSM 7039 / HB27).